Here is a 228-residue protein sequence, read N- to C-terminus: Protein K8.1 (228 aa).

Positions 1 to 26 (MSSTQIRTEIPVALLILCLCLVACHA) are cleaved as a signal peptide. Residues N55, N60, N70, and N85 are each glycosylated (N-linked (GlcNAc...) asparagine; by host). A disordered region spans residues 77–113 (GSPSSEYPNVSVSVEDTSASGSGEDAIDESGSGEEER). Residues 78-97 (SPSSEYPNVSVSVEDTSASG) show a composition bias toward polar residues. Residues 197–217 (LYILWAVGLLLGLVLILYLCV) form a helical membrane-spanning segment.

The protein localises to the host membrane. In Human herpesvirus 8 type P (isolate GK18) (HHV-8), this protein is Protein K8.1 (K8.1).